The sequence spans 1006 residues: Phosphatidylinositol-3,5-bisphosphate 3-phosphatase MTMR3 (1006 aa).

A compositionally biased stretch (low complexity) spans 1 to 10 (MTVTSSAAID). A disordered region spans residues 1–29 (MTVTSSAAIDIGGGGGGRRSDRLDSDRTS). Residues 18–29 (RRSDRLDSDRTS) are compositionally biased toward basic and acidic residues. In terms of domain architecture, Myotubularin phosphatase spans 224 to 630 (AWKFSEAVDE…INLRVWHEVF (407 aa)). A 1,2-diacyl-sn-glycero-3-phospho-(1D-myo-inositol-3,5-bisphosphate) contacts are provided by N377, N402, and I403. Positions 377, 402, and 403 each coordinate a 1,2-diacyl-sn-glycero-3-phospho-(1D-myo-inositol-3-phosphate). C463 serves as the catalytic Phosphocysteine intermediate. A 1,2-diacyl-sn-glycero-3-phospho-(1D-myo-inositol-3,5-bisphosphate) contacts are provided by S464, D465, G466, W467, D468, R469, K505, and R509. A 1,2-diacyl-sn-glycero-3-phospho-(1D-myo-inositol-3-phosphate) is bound by residues S464, D465, G466, W467, D468, and R469. R509 is an a 1,2-diacyl-sn-glycero-3-phospho-(1D-myo-inositol-3-phosphate) binding site. Positions 641–705 (FSPKEERPLS…PSDNTNSLPM (65 aa)) are disordered. The span at 651–705 (GCTTPMNTSTSTNLVKSKSSESINSLNVDGSAKESSQQHPTCSTTPSDNTNSLPM) shows a compositional bias: polar residues. An FYVE-type zinc finger spans residues 818-883 (EGESGHCAYC…ACDSCYDSMH (66 aa)). C824, C827, C845, C848, C853, C856, C875, and C878 together coordinate Zn(2+). The disordered stretch occupies residues 886–1006 (DLKLSSSSTT…DVLDVNEQPL (121 aa)). Low complexity-rich tracts occupy residues 890–901 (SSSSTTTTSSST) and 913–926 (DNNSDNVSENVSEN). Composition is skewed to basic and acidic residues over residues 933–954 (VEEKEAEDPIKEAESPSKETKC) and 976–985 (HSRDPLKSID).

The protein belongs to the protein-tyrosine phosphatase family. Non-receptor class myotubularin subfamily. As to expression, expressed in the body wall muscle and in eggs. Expressed in head neurons. Expressed in the intestine. Expressed in pharyngeal cells, vulval muscle cells and cells of the tail region.

It is found in the cytoplasm. Its subcellular location is the membrane. It catalyses the reaction a 1,2-diacyl-sn-glycero-3-phospho-(1D-myo-inositol-3,5-bisphosphate) + H2O = a 1,2-diacyl-sn-glycero-3-phospho-(1D-myo-inositol-5-phosphate) + phosphate. The catalysed reaction is a 1,2-diacyl-sn-glycero-3-phospho-(1D-myo-inositol-3-phosphate) + H2O = a 1,2-diacyl-sn-glycero-3-phospho-(1D-myo-inositol) + phosphate. The enzyme catalyses 1,2-dihexadecanoyl-sn-glycero-3-phospho-(1D-myo-inositol-3-phosphate) + H2O = 1,2-dihexadecanoyl-sn-glycero-3-phospho-(1D-myo-inositol) + phosphate. It carries out the reaction 1,2-dihexadecanoyl-sn-glycero-3-phospho-(1D-myo-inositol-3,5-phosphate) + H2O = 1,2-dihexadecanoyl-sn-glycero-3-phospho-(1D-myo-inositol-5-phosphate) + phosphate. It catalyses the reaction 1,2-dioctanoyl-sn-glycero-3-phospho-(1-D-myo-inositol-3-phosphate) + H2O = 1,2-dioctanoyl-sn-glycero-3-phospho-(1D-myo-inositol) + phosphate. Inhibited by sodium vanadate and peroxide. Functionally, preferentially dephosphorylates phosphatidylinositol 3-phosphate (PI3P), and has some activity towards phosphatidylinositol 3,5-bisphosphate (PI35P). Positively regulates autophagy and is recruited to autophagosomes by PI3P where it catalyzes PI3P turnover to promote autophagosome maturation. Thought to have a role in maintenance of muscle function. Involved in locomotion and lifespan determination. In Caenorhabditis elegans, this protein is Phosphatidylinositol-3,5-bisphosphate 3-phosphatase MTMR3.